A 122-amino-acid polypeptide reads, in one-letter code: UPF0102 protein NGR_c36770 (122 aa).

This sequence belongs to the UPF0102 family.

The chain is UPF0102 protein NGR_c36770 from Sinorhizobium fredii (strain NBRC 101917 / NGR234).